Here is a 152-residue protein sequence, read N- to C-terminus: Cytosolic calcium-binding protein 1 (152 aa).

7 repeat units span residues 57-62 (VEETEK), 67-71 (TEEAQ), 78-82 (VEIKK), 104-108 (VEAKK), 112-116 (VEEKK), 124-129 (VEEEKK), and 131-136 (EAEEEK). Residues 57-136 (VEETEKPIEE…EKKPEAEEEK (80 aa)) form a 7 X 5 AA approximate repeats of V-E-E-K-K region. The disordered stretch occupies residues 60–152 (TEKPIEETEE…VTAPVEKADE (93 aa)). Over residues 96-138 (DESKTEEVVEAKKEEEVEEKKTEEAPVVVEEEKKPEAEEEKPA) the composition is skewed to basic and acidic residues.

Predominantly expressed in petioles (at protein level). Mainly observed in shoots, flowers, siliques and roots, and, to a lower extent, in stems and leaves.

The protein resides in the cytoplasm. Its subcellular location is the cytosol. Its function is as follows. Binds calcium Ca(2+) and may act as a signal mediator to buffer Ca(2+). The chain is Cytosolic calcium-binding protein 1 from Arabidopsis thaliana (Mouse-ear cress).